Here is a 954-residue protein sequence, read N- to C-terminus: Glycine dehydrogenase (decarboxylating) (954 aa).

Residue K706 is modified to N6-(pyridoxal phosphate)lysine.

This sequence belongs to the GcvP family. In terms of assembly, the glycine cleavage system is composed of four proteins: P, T, L and H. The cofactor is pyridoxal 5'-phosphate.

The enzyme catalyses N(6)-[(R)-lipoyl]-L-lysyl-[glycine-cleavage complex H protein] + glycine + H(+) = N(6)-[(R)-S(8)-aminomethyldihydrolipoyl]-L-lysyl-[glycine-cleavage complex H protein] + CO2. In terms of biological role, the glycine cleavage system catalyzes the degradation of glycine. The P protein binds the alpha-amino group of glycine through its pyridoxal phosphate cofactor; CO(2) is released and the remaining methylamine moiety is then transferred to the lipoamide cofactor of the H protein. The sequence is that of Glycine dehydrogenase (decarboxylating) from Pseudomonas syringae pv. syringae (strain B728a).